The sequence spans 569 residues: 4-coumarate-CoA ligase 2 (569 aa).

A disordered region spans residues 1–24 (MITIAESHPQIHHSPPDTTAPSTP). Residues 216 to 220 (SSGTT), His-265, 337 to 339 (AAP), 359 to 360 (QG), Thr-364, Asp-448, Arg-463, and Lys-554 contribute to the ATP site. The segment at 290–359 (EMEGMLETIQ…GRLPQAVLGQ (70 aa)) is SBD1. An SBD2 region spans residues 360–427 (GYGMTEAGPV…VRGPQIMKGY (68 aa)).

Belongs to the ATP-dependent AMP-binding enzyme family. In terms of tissue distribution, mostly expressed in stems, and, to a lower extent, in bulbs.

It carries out the reaction (E)-4-coumarate + ATP + CoA = (E)-4-coumaroyl-CoA + AMP + diphosphate. The protein operates within phytoalexin biosynthesis; 3,4',5-trihydroxystilbene biosynthesis; 3,4',5-trihydroxystilbene from trans-4-coumarate: step 1/2. Its function is as follows. Produces CoA thioesters of a variety of hydroxy- and methoxy-substituted cinnamic acids, which are used to synthesize several phenylpropanoid-derived compounds, including anthocyanins, flavonoids, isoflavonoids, coumarins, lignin, suberin and wall-bound phenolics. This chain is 4-coumarate-CoA ligase 2, found in Narcissus pseudonarcissus (Daffodil).